The chain runs to 187 residues: Elongation factor P (187 aa).

Belongs to the elongation factor P family.

Its subcellular location is the cytoplasm. The protein operates within protein biosynthesis; polypeptide chain elongation. Functionally, involved in peptide bond synthesis. Stimulates efficient translation and peptide-bond synthesis on native or reconstituted 70S ribosomes in vitro. Probably functions indirectly by altering the affinity of the ribosome for aminoacyl-tRNA, thus increasing their reactivity as acceptors for peptidyl transferase. The polypeptide is Elongation factor P (Granulibacter bethesdensis (strain ATCC BAA-1260 / CGDNIH1)).